We begin with the raw amino-acid sequence, 202 residues long: Securin-2 (202 aa).

The disordered stretch occupies residues 60 to 105 (TRKALGTVNRATEKSVKTNGPRKQKQPSFSAKKMTEKTVKTKSSVP). A D-box motif is present at residues 61 to 64 (RKAL). Positions 163–173 (PPSPVKMPSPP) match the SH3-binding motif.

The protein belongs to the securin family. In terms of tissue distribution, expressed at low levels in the pituitary, liver, spleen, prostate, testis, ovary, small intestine and colon. Also expressed in various pituitary, testicular, liver and ovarian tumors.

The protein resides in the cytoplasm. The protein localises to the nucleus. This Homo sapiens (Human) protein is Securin-2 (PTTG2).